Here is a 347-residue protein sequence, read N- to C-terminus: Eukaryotic translation initiation factor 3 subunit H (347 aa).

The region spanning 1–142 (MKIMKHCSQT…LRAFRLSPRF (142 aa)) is the MPN domain.

It belongs to the eIF-3 subunit H family. Component of the eukaryotic translation initiation factor 3 (eIF-3) complex.

Its subcellular location is the cytoplasm. In terms of biological role, component of the eukaryotic translation initiation factor 3 (eIF-3) complex, which is involved in protein synthesis of a specialized repertoire of mRNAs and, together with other initiation factors, stimulates binding of mRNA and methionyl-tRNAi to the 40S ribosome. The eIF-3 complex specifically targets and initiates translation of a subset of mRNAs involved in cell proliferation. In Neosartorya fischeri (strain ATCC 1020 / DSM 3700 / CBS 544.65 / FGSC A1164 / JCM 1740 / NRRL 181 / WB 181) (Aspergillus fischerianus), this protein is Eukaryotic translation initiation factor 3 subunit H.